A 912-amino-acid chain; its full sequence is MPGPSPGLRALLGFWVALGLGILRLSAVAQEPFWADLQPRVALVERGGSLWLNCSTNCPRPERGGLETSLRRNGPEGLRWRARQLVDIREPETQPVCFFRCAATLQARGLIRTFQRPDRVELVPLPPWQPVGENFTLSCRVPGAGPRGSLTLTLLRGAQELIRRSFAGEPARARGAVLTATVLARREDHGANFSCRAELDLRPQGLALFENSSAPRQLWTYALPLDSPRLLAPRVLEVDSQSLVSCTLDGLFPASEAGVHLALGDKRLNPEVTLEGDAIVATATATAEEEGIKQLVCAVTLGGERRESRENVTVYSFPAPLLTLSEPSAPEGKLVTVTCTAGARALVTLEGVPAAAPGQPAQLQFNASESDDGRSFFCDATLELDGETLSKNGSAELRVLYAPRLDDADCPRSWTWPEGPEQTLRCEARGNPTPAVHCARSDGGAVLALGLLGPVTRALAGTYRCTAANVQGEAVKDVTLTVEYAPALDSVGCPERVTWLEGTEASLSCVAHGVPPPSVSCVRFRQADVIEGLLLVAREHAGTYRCEAINARALAKNVAVTVEYGPSFEERSCPSNWTWVEGSEQLFSCEVEGKPQPSVQCVGSEGASEGLLLPLAPLNPSPSDPSVPRDLAPGIYVCNATNPLGSAVKTVVVSAESPPQMDDSTCPSDQTWLEGAEAAGPACARGRPSPRVRCSREGAPRPARPRVSREDAGTYLCVATNAHGSDSRTVTVGVEYRPVVAELAASPSGGVRPGGNFTLTCRAEAWPPAQISWRAPPGAPNIGLSSNNSTLSVPGAMGSHGGEYECEATNAHGHARRITVRVAGPWLWIAVGGAVGGAVLLAAGAGLAFYVQSTACKKGEYNVQEAESSGEAVCLNGAGGGAGSGAEGGPEAEDSAESPAGGEVFAIQLTSA.

The signal sequence occupies residues 1–29 (MPGPSPGLRALLGFWVALGLGILRLSAVA). At 30–826 (QEPFWADLQP…RITVRVAGPW (797 aa)) the chain is on the extracellular side. Ig-like C2-type domains are found at residues 47-127 (GGSL…PLPP), 132-232 (GENF…RLLA), 239-324 (DSQS…LLTL), 332-395 (GKLV…NGSA), 403-481 (PRLD…VTLT), 486-561 (PALD…VAVT), 566-645 (PSFE…NPLG), 659-734 (PQMD…TVGV), and 738-819 (PVVA…RRIT). N-linked (GlcNAc...) (high mannose) asparagine glycosylation occurs at Asn-53. 2 cysteine pairs are disulfide-bonded: Cys-54/Cys-97 and Cys-58/Cys-101. N-linked (GlcNAc...) asparagine glycosylation occurs at Asn-134. Cysteines 139 and 195 form a disulfide. 2 positions are modified to phosphothreonine: Thr-179 and Thr-181. Asn-192 and Asn-211 each carry an N-linked (GlcNAc...) asparagine glycan. Cys-246 and Cys-297 are oxidised to a cystine. Residues Asn-311, Asn-366, and Asn-392 are each glycosylated (N-linked (GlcNAc...) asparagine). Cysteines 339 and 378 form a disulfide. Cystine bridges form between Cys-410–Cys-465, Cys-493–Cys-546, and Cys-573–Cys-638. Asn-576 and Asn-639 each carry an N-linked (GlcNAc...) asparagine glycan. Cysteines 666 and 717 form a disulfide. The disordered stretch occupies residues 678-708 (AAGPACARGRPSPRVRCSREGAPRPARPRVS). N-linked (GlcNAc...) asparagine glycans are attached at residues Asn-756, Asn-787, and Asn-788. An intrachain disulfide couples Cys-761 to Cys-806. Residues 827 to 847 (LWIAVGGAVGGAVLLAAGAGL) traverse the membrane as a helical segment. The Cytoplasmic portion of the chain corresponds to 848–912 (AFYVQSTACK…EVFAIQLTSA (65 aa)). The disordered stretch occupies residues 880-902 (GGAGSGAEGGPEAEDSAESPAGG).

This sequence belongs to the immunoglobulin superfamily. ICAM family. In terms of processing, glycosylation at Asn-53 is critical for functional folding. In terms of tissue distribution, expressed on neurons in the most rostral segment of the mammalian brain, the telencephalon.

It localises to the membrane. ICAM proteins are ligands for the leukocyte adhesion protein LFA-1 (integrin alpha-L/beta-2). The polypeptide is Intercellular adhesion molecule 5 (ICAM5) (Oryctolagus cuniculus (Rabbit)).